The chain runs to 282 residues: MNLFQAIILGIVQGLTEFLPISSSAHLRIVPALAGWDDPGAAFTAIVQIGTLAAVLIYFMKDIISIVGAVVSDLLKGKPLASDESRTGWMIAAGTIPIVVFGLAFKDDIETTLRSLYWVSAALIALALVLSIAEKHTSNRARQGRRGKAISEITWLDAMIIGFAQAMALIPGSSRSGVTITAGLFRNLDRETSARFSFLLSLPSVFAAGIYQLYKTWDVITASTDNMINIAVATVFAFIFGYLSIAFLLTYLKRHSTGIFIGYRLLLGISLIIMIGTGHLMP.

7 consecutive transmembrane segments (helical) span residues 40–60, 89–109, 113–133, 150–170, 196–216, 230–250, and 258–278; these read GAAF…IYFM, WMIA…KDDI, LRSL…LSIA, ISEI…MALI, FSFL…LYKT, IAVA…FLLT, and GIFI…IGTG.

This sequence belongs to the UppP family.

The protein localises to the cell inner membrane. It catalyses the reaction di-trans,octa-cis-undecaprenyl diphosphate + H2O = di-trans,octa-cis-undecaprenyl phosphate + phosphate + H(+). In terms of biological role, catalyzes the dephosphorylation of undecaprenyl diphosphate (UPP). Confers resistance to bacitracin. The polypeptide is Undecaprenyl-diphosphatase (Chlorobaculum parvum (strain DSM 263 / NCIMB 8327) (Chlorobium vibrioforme subsp. thiosulfatophilum)).